The sequence spans 107 residues: Large ribosomal subunit protein eL33 (107 aa).

It belongs to the eukaryotic ribosomal protein eL33 family. Component of the large ribosomal subunit. Mature ribosomes consist of a small (40S) and a large (60S) subunit. The 40S subunit contains about 32 different proteins and 1 molecule of RNA (18S). The 60S subunit contains 45 different proteins and 3 molecules of RNA (25S, 5.8S and 5S).

Its subcellular location is the cytoplasm. Its function is as follows. Component of the ribosome, a large ribonucleoprotein complex responsible for the synthesis of proteins in the cell. The small ribosomal subunit (SSU) binds messenger RNAs (mRNAs) and translates the encoded message by selecting cognate aminoacyl-transfer RNA (tRNA) molecules. The large subunit (LSU) contains the ribosomal catalytic site termed the peptidyl transferase center (PTC), which catalyzes the formation of peptide bonds, thereby polymerizing the amino acids delivered by tRNAs into a polypeptide chain. The nascent polypeptides leave the ribosome through a tunnel in the LSU and interact with protein factors that function in enzymatic processing, targeting, and the membrane insertion of nascent chains at the exit of the ribosomal tunnel. The polypeptide is Large ribosomal subunit protein eL33 (Candida albicans (strain SC5314 / ATCC MYA-2876) (Yeast)).